A 143-amino-acid chain; its full sequence is FAD synthase (143 aa).

ATP contacts are provided by residues threonine 13–phenylalanine 14, histidine 18–histidine 21, and aspartate 96.

It belongs to the archaeal FAD synthase family. In terms of assembly, homodimer. The cofactor is a divalent metal cation.

It catalyses the reaction FMN + ATP + H(+) = FAD + diphosphate. It participates in cofactor biosynthesis; FAD biosynthesis; FAD from FMN: step 1/1. Its function is as follows. Catalyzes the transfer of the AMP portion of ATP to flavin mononucleotide (FMN) to produce flavin adenine dinucleotide (FAD) coenzyme. This Methanothrix thermoacetophila (strain DSM 6194 / JCM 14653 / NBRC 101360 / PT) (Methanosaeta thermophila) protein is FAD synthase.